A 982-amino-acid chain; its full sequence is Presequence protease, mitochondrial (982 aa).

The transit peptide at 1–7 (MFQIRNY) directs the protein to the mitochondrion. Histidine 84 provides a ligand contact to Zn(2+). The active-site Proton acceptor is the glutamate 87. Residue histidine 88 coordinates Zn(2+). Glutamate 160 is a catalytic residue. Glutamate 185 contacts Zn(2+).

Belongs to the peptidase M16 family. PreP subfamily. As to quaternary structure, monomer and homodimer; homodimerization is induced by binding of the substrate. Zn(2+) serves as cofactor.

The protein resides in the mitochondrion intermembrane space. Its subcellular location is the mitochondrion matrix. Functionally, degrades mitochondrial transit peptides after their cleavage in the intermembrane space or in the matrix, and presequence peptides; clearance of these peptides is required to keep the presequence processing machinery running. Preferentially cleaves the N-terminal side of paired basic amino acid residues. Also degrades other unstructured peptides. May function as an ATP-dependent peptidase as opposed to a metalloendopeptidase. The sequence is that of Presequence protease, mitochondrial (CYM1) from Kluyveromyces lactis (strain ATCC 8585 / CBS 2359 / DSM 70799 / NBRC 1267 / NRRL Y-1140 / WM37) (Yeast).